The chain runs to 475 residues: Kynureninase (475 aa).

Pyridoxal 5'-phosphate contacts are provided by residues L142, T143, 170-173, D255, H258, and Y280; that span reads FPSD. K281 is subject to N6-(pyridoxal phosphate)lysine. 2 residues coordinate pyridoxal 5'-phosphate: W320 and N348.

Belongs to the kynureninase family. As to quaternary structure, homodimer. Requires pyridoxal 5'-phosphate as cofactor.

The protein resides in the cytoplasm. It catalyses the reaction L-kynurenine + H2O = anthranilate + L-alanine + H(+). The catalysed reaction is 3-hydroxy-L-kynurenine + H2O = 3-hydroxyanthranilate + L-alanine + H(+). Its pathway is amino-acid degradation; L-kynurenine degradation; L-alanine and anthranilate from L-kynurenine: step 1/1. It participates in cofactor biosynthesis; NAD(+) biosynthesis; quinolinate from L-kynurenine: step 2/3. Functionally, catalyzes the cleavage of L-kynurenine (L-Kyn) and L-3-hydroxykynurenine (L-3OHKyn) into anthranilic acid (AA) and 3-hydroxyanthranilic acid (3-OHAA), respectively. The protein is Kynureninase (bna5) of Botryotinia fuckeliana (strain B05.10) (Noble rot fungus).